The chain runs to 509 residues: tRNA-2-methylthio-N(6)-dimethylallyladenosine synthase (509 aa).

The segment at 1-21 is disordered; sequence MNEKQRIESGQVNPSDKKSEK. The 119-residue stretch at 66 to 184 folds into the MTTase N-terminal domain; it reads RKFYIRTYGC…LPELLSEAYL (119 aa). Positions 75, 111, 145, 221, 225, and 228 each coordinate [4Fe-4S] cluster. Positions 207–437 constitute a Radical SAM core domain; sequence RTGKIKGWVN…NEVVNEISAK (231 aa). The TRAM domain maps to 440–503; that stretch reads KEYEGQVVEV…TWSLDGEMVG (64 aa).

It belongs to the methylthiotransferase family. MiaB subfamily. As to quaternary structure, monomer. The cofactor is [4Fe-4S] cluster.

The protein resides in the cytoplasm. It catalyses the reaction N(6)-dimethylallyladenosine(37) in tRNA + (sulfur carrier)-SH + AH2 + 2 S-adenosyl-L-methionine = 2-methylsulfanyl-N(6)-dimethylallyladenosine(37) in tRNA + (sulfur carrier)-H + 5'-deoxyadenosine + L-methionine + A + S-adenosyl-L-homocysteine + 2 H(+). In terms of biological role, catalyzes the methylthiolation of N6-(dimethylallyl)adenosine (i(6)A), leading to the formation of 2-methylthio-N6-(dimethylallyl)adenosine (ms(2)i(6)A) at position 37 in tRNAs that read codons beginning with uridine. In Bacillus licheniformis (strain ATCC 14580 / DSM 13 / JCM 2505 / CCUG 7422 / NBRC 12200 / NCIMB 9375 / NCTC 10341 / NRRL NRS-1264 / Gibson 46), this protein is tRNA-2-methylthio-N(6)-dimethylallyladenosine synthase.